The sequence spans 152 residues: MKCPSCQHNGTRVLDSRPVDDGKSIRRRRECESCHYRFTTFEKVEETPLIVVKKEGVREEFSREKMLRGLIKACEKRPVSLKTLEDMCFDIEKELRNQGCSEVKSELVGEMVMDRLAKIDEVAYVRFASVYRQFKDINVFIDELKDLIKKER.

Residues cysteine 3–cysteine 34 fold into a zinc finger. In terms of domain architecture, ATP-cone spans leucine 49–valine 139.

Belongs to the NrdR family. Zn(2+) is required as a cofactor.

Negatively regulates transcription of bacterial ribonucleotide reductase nrd genes and operons by binding to NrdR-boxes. This chain is Transcriptional repressor NrdR, found in Bacillus subtilis (strain 168).